The primary structure comprises 647 residues: Endogenous retrovirus group K member 8 Gag polyprotein (647 aa).

Gly2 carries the N-myristoyl glycine lipid modification. Residues 165 to 264 (GKGPELVGPS…APPSRQGSEL (100 aa)) are disordered. The span at 232 to 247 (GMPPAPQGREPYPQPP) shows a compositional bias: pro residues. 2 CCHC-type zinc fingers span residues 544 to 561 (GKCY…NCPV) and 580 to 597 (DLCP…QCRS). A disordered region spans residues 598–641 (KFDKNGQPLSGNEQRGQPQAPQQTGAFPIQPFVPQGFQDNNPHC). Residues 604–622 (QPLSGNEQRGQPQAPQQTG) are compositionally biased toward polar residues.

It belongs to the beta type-B retroviral Gag protein family. HERV class-II K(HML-2) gag subfamily. In terms of processing, myristoylation is essential for retroviral assembly. Alteration of the glycine residue leads to a block in the budding of particles and an accumulation of Gag inside the cell. Specific enzymatic cleavages may yield mature proteins.

Its subcellular location is the cell membrane. Its function is as follows. The products of the Gag polyproteins of infectious retroviruses perform highly complex orchestrated tasks during the assembly, budding, maturation, and infection stages of the viral replication cycle. During viral assembly, the proteins form membrane associations and self-associations that ultimately result in budding of an immature virion from the infected cell. Gag precursors also function during viral assembly to selectively bind and package two plus strands of genomic RNA. Endogenous Gag proteins may have kept, lost or modified their original function during evolution. In Homo sapiens (Human), this protein is Endogenous retrovirus group K member 8 Gag polyprotein (ERVK-8).